The following is a 290-amino-acid chain: Bifunctional protein FolD (290 aa).

NADP(+)-binding positions include 167 to 169 (GRS), Ser192, and Ile233.

The protein belongs to the tetrahydrofolate dehydrogenase/cyclohydrolase family. Homodimer.

It catalyses the reaction (6R)-5,10-methylene-5,6,7,8-tetrahydrofolate + NADP(+) = (6R)-5,10-methenyltetrahydrofolate + NADPH. It carries out the reaction (6R)-5,10-methenyltetrahydrofolate + H2O = (6R)-10-formyltetrahydrofolate + H(+). Its pathway is one-carbon metabolism; tetrahydrofolate interconversion. Functionally, catalyzes the oxidation of 5,10-methylenetetrahydrofolate to 5,10-methenyltetrahydrofolate and then the hydrolysis of 5,10-methenyltetrahydrofolate to 10-formyltetrahydrofolate. The chain is Bifunctional protein FolD from Gloeobacter violaceus (strain ATCC 29082 / PCC 7421).